The primary structure comprises 138 residues: Protein Rrf1 (138 aa).

Positions 4 to 116 constitute a Response regulatory domain; it reads RILVVQEDPD…LLLALVDRAL (113 aa). Asp-13 and Asp-53 each carry 4-aspartylphosphate.

Functionally, may be involved in regulation of gene transcription. Belongs to the family of response regulators, and members of this family involved in the regulation of gene transcription are two-domain proteins. This protein contains only the N-terminal phosphorylation domain and not the C-terminal DNA-binding domain but it may bind to Rrf2 protein and the latter may bind to DNA. The sequence is that of Protein Rrf1 (rrf1) from Nitratidesulfovibrio vulgaris (strain ATCC 29579 / DSM 644 / CCUG 34227 / NCIMB 8303 / VKM B-1760 / Hildenborough) (Desulfovibrio vulgaris).